We begin with the raw amino-acid sequence, 283 residues long: Non-selective voltage-gated ion channel VDAC3 (283 aa).

N-acetylcysteine is present on C2. T4 is modified (phosphothreonine). An N6-acetyllysine mark is found at K12, K15, and K20. Transmembrane regions (beta stranded) follow at residues 26–35 and 39–47; these read MVKIDLKTKS and VEFSTSGHA. Residues K53 and K61 each participate in a glycyl lysine isopeptide (Lys-Gly) (interchain with G-Cter in ubiquitin) cross-link. 3 beta stranded membrane-spanning segments follow: residues 54–64, 69–76, and 80–89; these read ASGNLETKYKV, LTFTQKWN, and TLGTEISWEN. K90 bears the N6-acetyllysine mark. Residues 95-104 traverse the membrane as a beta stranded segment; that stretch reads LKLTLDTIFV. Residues K109 and K110 each participate in a glycyl lysine isopeptide (Lys-Gly) (interchain with G-Cter in ubiquitin) cross-link. A run of 10 beta stranded transmembrane segments spans residues 111-120, 123-130, 137-145, 150-158, 163-175, 178-185, 189-198, 202-211, 218-227, and 231-238; these read SGKLKASYKR, FSVGSNVD, TIYGWAVLA, LAGYQMSFD, KLSQ…GYKA, FQLHTHVN, EFGGSIYQKV, IETSINLAWT, RFGIAAKYML, and TSLSAKVN. K163 is covalently cross-linked (Glycyl lysine isopeptide (Lys-Gly) (interchain with G-Cter in ubiquitin)). The residue at position 241 (S241) is a Phosphoserine. NAD(+) contacts are provided by residues 242-244 and 260-264; these read LIG and SALID. A run of 2 beta stranded transmembrane segments spans residues 242 to 251 and 254 to 263; these read LIGLGYTQTL and GVKLTLSALI. K266 carries the post-translational modification N6-acetyllysine; alternate. Residue K266 forms a Glycyl lysine isopeptide (Lys-Gly) (interchain with G-Cter in ubiquitin); alternate linkage. Residues 273-282 form a beta stranded membrane-spanning segment; it reads HKVGLGFELE. Residue K274 forms a Glycyl lysine isopeptide (Lys-Gly) (interchain with G-Cter in ubiquitin) linkage.

The protein belongs to the eukaryotic mitochondrial porin family. As to quaternary structure, interacts with ARMC12 in a TBC1D21-dependent manner. Interacts with MISFA. Post-translationally, ubiquitinated by PRKN during mitophagy, leading to its degradation and enhancement of mitophagy. Deubiquitinated by USP30. Expressed in erythrocytes (at protein level). Widely expressed. Highest in testis.

The protein localises to the mitochondrion outer membrane. The protein resides in the membrane. The catalysed reaction is chloride(in) = chloride(out). The enzyme catalyses K(+)(in) = K(+)(out). Its function is as follows. Non-selective voltage-gated ion channel that mediates the transport of anions and cations through the mitochondrion outer membrane and plasma membrane. Forms a high-conducting channel with a stable open state and a voltage-induced closure with a mild preference for anions over cations. Involved in male fertility and sperm mitochondrial sheath formation. This Homo sapiens (Human) protein is Non-selective voltage-gated ion channel VDAC3.